We begin with the raw amino-acid sequence, 130 residues long: Large ribosomal subunit protein eL32 (130 aa).

Ser-40 is modified (phosphoserine).

Belongs to the eukaryotic ribosomal protein eL32 family. Component of the large ribosomal subunit (LSU). Mature yeast ribosomes consist of a small (40S) and a large (60S) subunit. The 40S small subunit contains 1 molecule of ribosomal RNA (18S rRNA) and 33 different proteins (encoded by 57 genes). The large 60S subunit contains 3 rRNA molecules (25S, 5.8S and 5S rRNA) and 46 different proteins (encoded by 81 genes).

It localises to the cytoplasm. In terms of biological role, component of the ribosome, a large ribonucleoprotein complex responsible for the synthesis of proteins in the cell. The small ribosomal subunit (SSU) binds messenger RNAs (mRNAs) and translates the encoded message by selecting cognate aminoacyl-transfer RNA (tRNA) molecules. The large subunit (LSU) contains the ribosomal catalytic site termed the peptidyl transferase center (PTC), which catalyzes the formation of peptide bonds, thereby polymerizing the amino acids delivered by tRNAs into a polypeptide chain. The nascent polypeptides leave the ribosome through a tunnel in the LSU and interact with protein factors that function in enzymatic processing, targeting, and the membrane insertion of nascent chains at the exit of the ribosomal tunnel. The chain is Large ribosomal subunit protein eL32 from Saccharomyces cerevisiae (strain ATCC 204508 / S288c) (Baker's yeast).